The chain runs to 212 residues: MAIGLIGRKVGMTRIFTEDGTSIPVTVIEIAGNRVTQVKTLETDGYRALQVTTGTKKANRITKAEAGHFAKGGVEAGRGLWEMRLADGEGEGIEVGAEINVDIFADTVKVDVTGQSKGKGFQGGVKRWNFRTQDMTHGNSLAHRSNGSIGQNQTPGRVFKGKKMSGHMGAEQVTTQNLHVVRVDAERNLLLVRGAVPGATNGDLIIKPAVKA.

At Q153 the chain carries N5-methylglutamine.

It belongs to the universal ribosomal protein uL3 family. As to quaternary structure, part of the 50S ribosomal subunit. Forms a cluster with proteins L14 and L19. Methylated by PrmB.

Functionally, one of the primary rRNA binding proteins, it binds directly near the 3'-end of the 23S rRNA, where it nucleates assembly of the 50S subunit. The polypeptide is Large ribosomal subunit protein uL3 (Shewanella frigidimarina (strain NCIMB 400)).